The chain runs to 150 residues: Phosphopantetheine adenylyltransferase (150 aa).

Residue Thr-9 participates in substrate binding. ATP-binding positions include 9-10 (TF) and His-17. Positions 41, 73, and 87 each coordinate substrate. ATP-binding positions include 88–90 (GIR), Glu-98, and 122–128 (LTCVSST).

It belongs to the bacterial CoaD family. As to quaternary structure, homohexamer. Mg(2+) serves as cofactor.

The protein resides in the cytoplasm. It catalyses the reaction (R)-4'-phosphopantetheine + ATP + H(+) = 3'-dephospho-CoA + diphosphate. It functions in the pathway cofactor biosynthesis; coenzyme A biosynthesis; CoA from (R)-pantothenate: step 4/5. Reversibly transfers an adenylyl group from ATP to 4'-phosphopantetheine, yielding dephospho-CoA (dPCoA) and pyrophosphate. The chain is Phosphopantetheine adenylyltransferase from Bacteroides fragilis (strain ATCC 25285 / DSM 2151 / CCUG 4856 / JCM 11019 / LMG 10263 / NCTC 9343 / Onslow / VPI 2553 / EN-2).